Here is a 264-residue protein sequence, read N- to C-terminus: S-adenosylmethionine decarboxylase proenzyme (264 aa).

The active-site Schiff-base intermediate with substrate; via pyruvic acid is the Ser-112. Pyruvic acid (Ser); by autocatalysis is present on Ser-112. His-117 functions as the Proton acceptor; for processing activity in the catalytic mechanism. Cys-140 functions as the Proton donor; for catalytic activity in the catalytic mechanism.

It belongs to the prokaryotic AdoMetDC family. Type 2 subfamily. As to quaternary structure, heterooctamer of four alpha and four beta chains arranged as a tetramer of alpha/beta heterodimers. Pyruvate is required as a cofactor. Post-translationally, is synthesized initially as an inactive proenzyme. Formation of the active enzyme involves a self-maturation process in which the active site pyruvoyl group is generated from an internal serine residue via an autocatalytic post-translational modification. Two non-identical subunits are generated from the proenzyme in this reaction, and the pyruvate is formed at the N-terminus of the alpha chain, which is derived from the carboxyl end of the proenzyme. The post-translation cleavage follows an unusual pathway, termed non-hydrolytic serinolysis, in which the side chain hydroxyl group of the serine supplies its oxygen atom to form the C-terminus of the beta chain, while the remainder of the serine residue undergoes an oxidative deamination to produce ammonia and the pyruvoyl group blocking the N-terminus of the alpha chain.

The catalysed reaction is S-adenosyl-L-methionine + H(+) = S-adenosyl 3-(methylsulfanyl)propylamine + CO2. The protein operates within amine and polyamine biosynthesis; S-adenosylmethioninamine biosynthesis; S-adenosylmethioninamine from S-adenosyl-L-methionine: step 1/1. In terms of biological role, catalyzes the decarboxylation of S-adenosylmethionine to S-adenosylmethioninamine (dcAdoMet), the propylamine donor required for the synthesis of the polyamines spermine and spermidine from the diamine putrescine. The sequence is that of S-adenosylmethionine decarboxylase proenzyme from Yersinia enterocolitica serotype O:8 / biotype 1B (strain NCTC 13174 / 8081).